Consider the following 183-residue polypeptide: ER membrane protein complex subunit 4 (183 aa).

N-acetylthreonine is present on T2. The Cytoplasmic portion of the chain corresponds to 2 to 66; sequence TAQGGLVANR…VQETDRILVE (65 aa). A disordered region spans residues 20–39; sequence ELSGPGGGSRGRSDRGSGQG. Phosphoserine is present on S36. Residues 67–87 traverse the membrane as a helical segment; the sequence is KRCWDIALGPLKQIPMNLFIM. Over 88-98 the chain is Lumenal; the sequence is YMAGNTISIFP. The helical transmembrane segment at 99–120 threads the bilayer; sequence TMMVCMMAWRPIQALMAISATF. Residues 121-127 are Cytoplasmic-facing; it reads KMLESSS. A helical transmembrane segment spans residues 128 to 148; it reads QKFLQGLVYLIGNLMGLALAV. Over 149-183 the chain is Lumenal; the sequence is YKCQSMGLLPTHASDWLAFIEPPERMEFSGGGLLL.

Belongs to the EMC4 family. As to quaternary structure, component of the ER membrane protein complex (EMC). As to expression, isoform 1 is expressed in brain and heart. Isoform 2 is expressed in heart.

It is found in the endoplasmic reticulum membrane. Functionally, part of the endoplasmic reticulum membrane protein complex (EMC) that enables the energy-independent insertion into endoplasmic reticulum membranes of newly synthesized membrane proteins. Preferentially accommodates proteins with transmembrane domains that are weakly hydrophobic or contain destabilizing features such as charged and aromatic residues. Involved in the cotranslational insertion of multi-pass membrane proteins in which stop-transfer membrane-anchor sequences become ER membrane spanning helices. It is also required for the post-translational insertion of tail-anchored/TA proteins in endoplasmic reticulum membranes. By mediating the proper cotranslational insertion of N-terminal transmembrane domains in an N-exo topology, with translocated N-terminus in the lumen of the ER, controls the topology of multi-pass membrane proteins like the G protein-coupled receptors. By regulating the insertion of various proteins in membranes, it is indirectly involved in many cellular processes. This is ER membrane protein complex subunit 4 (EMC4) from Homo sapiens (Human).